The following is a 331-amino-acid chain: N-arachidonyl glycine receptor (331 aa).

At 1-26 the chain is on the extracellular side; the sequence is MATLSNHNQLDLSNGSHPEEYKIAAL. Asparagine 14 carries N-linked (GlcNAc...) asparagine glycosylation. Residues 27–47 traverse the membrane as a helical segment; that stretch reads VFYSCIFLIGLFVNVTALWVF. Over 48–56 the chain is Cytoplasmic; that stretch reads SCTTKKRTT. A helical transmembrane segment spans residues 57–77; that stretch reads VTIYMMNVALLDLVFILSLPF. Residues 78–95 lie on the Extracellular side of the membrane; it reads RMFYYAKGEWPFGEYFCH. Cysteines 94 and 172 form a disulfide. Residues 96–116 form a helical membrane-spanning segment; it reads ILGALVVFYPSLALWLLAFIS. The Cytoplasmic segment spans residues 117–138; that stretch reads ADRYMAIVQPKYAKELKNTGKA. A helical transmembrane segment spans residues 139–159; that stretch reads VLACGGVWVMTLTTTVPLLLL. The Extracellular segment spans residues 160–191; the sequence is YEDPDKASSPATCLKISDITHLKAVNVLNFTR. Asparagine 188 carries N-linked (GlcNAc...) asparagine glycosylation. A helical membrane pass occupies residues 192 to 212; the sequence is LIFFFLIPLFIMIGCYVVIIH. Residues 213 to 236 lie on the Cytoplasmic side of the membrane; sequence SLLRGQTSKLKPKVKEKSIRIIMT. A helical transmembrane segment spans residues 237–257; the sequence is LLLQVLVCFVPFHICFAVLML. Residues 258 to 268 are Extracellular-facing; it reads QGQENSYSPWG. Residues 269-289 traverse the membrane as a helical segment; the sequence is AFTTFLMNLSTCLDVVLYYIV. The Cytoplasmic segment spans residues 290-331; that stretch reads SKQFQARVISVMLYRNYLRSVRRKSVRSGSLRSLSNMNSEML. Phosphoserine is present on serine 322.

The protein belongs to the G-protein coupled receptor 1 family. Expressed in the eye including cornea, retina, iris and ciliary epithelium (at protein level). Expressed in spleen, liver and lymphocytes with highest expression levels in intestinal intraepithelial lymphocytes.

It is found in the cell membrane. The protein localises to the cytoplasmic vesicle membrane. Its function is as follows. G protein-coupled receptor (GPCR) that plays a role in diverse physiological processes particularly within the immune and nervous systems. Becomes active when triggered by various endogenous ligands including endocannabinoid N-arachidonyl glycine (NAGly), delta-9-tetrahydrocannabinol or resolvin D2/RvD2 derived from the omega-3 fatty acid docosahexaenoic acid (DHA). Upon RvD2 binding, facilitates the resolution of inflammation, aiding in tissue repair and homeostasis. Mechanistically, RvD2 ligation initiates Galphas protein coupling, activation of cAMP-PKA signaling pathway and phosphorylation of STAT3, leading to RvD2-stimulated macrophage phagocytosis. Mediates NAGly-induced process of reorganization of actin filaments and induction of acrosomal exocytosis. Activation by N-arachidonoyl glycine (NAGly) can also induce apoptosis in macrophages. Plays a role in homeostasis of CD8+ subsets of intraepithelial lymphocytes (IELs) (CD8alphaalpha and CD8alphabeta IELs) in small intestine by supporting preferential migration of CD8alphaalpha T-cells to intraepithelial compartment over lamina propria compartment, and by mediating their reconstitution into small intestine after bone marrow transplant. Also participates in hypotensive responses, mediating reduction in intraocular and blood pressure. This is N-arachidonyl glycine receptor from Mus musculus (Mouse).